An 886-amino-acid polypeptide reads, in one-letter code: MNLQELKQKYNYDVATKMMQQYLDIKFAHLDCLLLFRMGDFYEMFYEDAILASNVLGIALTKRGKNGEEEIAMCGVPYHALENYLTKLIEENYKVAICDQLETPEEAKNRGGYKAVVTRDVTRIITPGTIIEENLIASAEPNYLASLVIPKNKETASLCYVDLSTSEIVVVNVPETEILNELARLKPREILLSENLRSSNLADSIFKQLNFRITYQVDSFFAINKCKKIILDFYKMKDIKGIGEISSSQICAIGSVLEYLSLTQKQNIPHLPIPRIINFHSYMTIDFSTRRNLEIVTNSQGDSQGSLLSTLNHTVTKQGGRLLYNFLSSPLTNIAKINHRLNITEFFYSNLEIVKKIRELLKKTSDIERCLTRITMNRSSGRDLLSIKYTLETATIIKEVFFDAYGFNLPDFIEKIIKPLSGDAELYNLIDETIREDAPNNLNDGGIIKHEYHPKVAQLHDLINNGKLYIEKLKDQYRKETGIDSLKISHNNVIGLFIDITAKNVNKILDPKFIHRQTTVNHVRYTTAELQKLESELVNAKTLVISLEKELYADICSQVIEKASYLRMLASSLSGLDVFCNFAYIADEYDYVKPEFTDDLSFDIVKGRHPVVEKALQRESKSFVYNDCHLSELERIWLITGPNMAGKSTFLRQNAIIAIIAQIGSFVPAKSAKIGVVDKIFSRIGAADDLIKGQSTFMAEMLETSAILAQSTKNSLIILDEVGRGTSTYDGVSIAWSVLEYIHDKLKCRCLFATHYHELTVMSNFLPALQNYTIAIEESGKDILFLHNIISGAADRSYGLHVAALAGLPESVINRAEQILLKFEKTSTGKGKNILSTESNNLSLFYLEPNKTTISSKLDKKFSTIDPDKLSPKEALELIYELKKLV.

ATP is bound at residue 641–648 (GPNMAGKS).

The protein belongs to the DNA mismatch repair MutS family.

In terms of biological role, this protein is involved in the repair of mismatches in DNA. It is possible that it carries out the mismatch recognition step. This protein has a weak ATPase activity. This Rickettsia rickettsii (strain Sheila Smith) protein is DNA mismatch repair protein MutS.